The chain runs to 276 residues: Large ribosomal subunit protein uL2 (276 aa).

2 disordered regions span residues 30–52 (VKGL…TTSR) and 224–257 (VMNP…KGYK). Polar residues predominate over residues 41-52 (GGRNNHGRTTSR).

The protein belongs to the universal ribosomal protein uL2 family. Part of the 50S ribosomal subunit. Forms a bridge to the 30S subunit in the 70S ribosome.

Its function is as follows. One of the primary rRNA binding proteins. Required for association of the 30S and 50S subunits to form the 70S ribosome, for tRNA binding and peptide bond formation. It has been suggested to have peptidyltransferase activity; this is somewhat controversial. Makes several contacts with the 16S rRNA in the 70S ribosome. The sequence is that of Large ribosomal subunit protein uL2 from Gluconacetobacter diazotrophicus (strain ATCC 49037 / DSM 5601 / CCUG 37298 / CIP 103539 / LMG 7603 / PAl5).